A 205-amino-acid polypeptide reads, in one-letter code: Holliday junction branch migration complex subunit RuvA (205 aa).

Positions 1–64 (MIGRLNGILV…EDAQLLFGFN (64 aa)) are domain I. Residues 65 to 143 (NKVERALFRE…NWGNDLFTPF (79 aa)) form a domain II region. The flexible linker stretch occupies residues 144–156 (SDSAVIEPFSDAT). The interval 157–205 (IANNAADDAVSALVSLGYKLPQAQKAVKSVSKPDMSTEVLIKESLKSML) is domain III.

This sequence belongs to the RuvA family. As to quaternary structure, homotetramer. Forms an RuvA(8)-RuvB(12)-Holliday junction (HJ) complex. HJ DNA is sandwiched between 2 RuvA tetramers; dsDNA enters through RuvA and exits via RuvB. An RuvB hexamer assembles on each DNA strand where it exits the tetramer. Each RuvB hexamer is contacted by two RuvA subunits (via domain III) on 2 adjacent RuvB subunits; this complex drives branch migration. In the full resolvosome a probable DNA-RuvA(4)-RuvB(12)-RuvC(2) complex forms which resolves the HJ.

The protein localises to the cytoplasm. The RuvA-RuvB-RuvC complex processes Holliday junction (HJ) DNA during genetic recombination and DNA repair, while the RuvA-RuvB complex plays an important role in the rescue of blocked DNA replication forks via replication fork reversal (RFR). RuvA specifically binds to HJ cruciform DNA, conferring on it an open structure. The RuvB hexamer acts as an ATP-dependent pump, pulling dsDNA into and through the RuvAB complex. HJ branch migration allows RuvC to scan DNA until it finds its consensus sequence, where it cleaves and resolves the cruciform DNA. This chain is Holliday junction branch migration complex subunit RuvA, found in Pseudoalteromonas translucida (strain TAC 125).